The primary structure comprises 290 residues: Nucleotide-binding protein Clos_0574 (290 aa).

Residue 8-15 (GLSGAGKS) coordinates ATP. 59 to 62 (DIRG) is a GTP binding site.

It belongs to the RapZ-like family.

Functionally, displays ATPase and GTPase activities. The protein is Nucleotide-binding protein Clos_0574 of Alkaliphilus oremlandii (strain OhILAs) (Clostridium oremlandii (strain OhILAs)).